Consider the following 118-residue polypeptide: Developmental pluripotency-associated protein 5A (118 aa).

The region spanning 24–86 is the KH; atypical domain; sequence PEVFQVQSLV…NNKIRAKWML (63 aa).

Belongs to the KHDC1 family.

The protein localises to the cytoplasm. In terms of biological role, involved in the maintenance of embryonic stem (ES) cell pluripotency. Dispensable for self-renewal of pluripotent ES cells and establishment of germ cells. Associates with specific target mRNAs. The chain is Developmental pluripotency-associated protein 5A (Dppa5a) from Mus musculus (Mouse).